A 397-amino-acid chain; its full sequence is Succinate--CoA ligase [ADP-forming] subunit beta (397 aa).

The region spanning K9–A254 is the ATP-grasp domain. Residues K46, G53–G55, E109, S112, and E117 each bind ATP. Positions 209 and 223 each coordinate Mg(2+). Substrate is bound by residues N274 and G331 to M333.

This sequence belongs to the succinate/malate CoA ligase beta subunit family. As to quaternary structure, heterotetramer of two alpha and two beta subunits. It depends on Mg(2+) as a cofactor.

It catalyses the reaction succinate + ATP + CoA = succinyl-CoA + ADP + phosphate. It carries out the reaction GTP + succinate + CoA = succinyl-CoA + GDP + phosphate. It participates in carbohydrate metabolism; tricarboxylic acid cycle; succinate from succinyl-CoA (ligase route): step 1/1. Succinyl-CoA synthetase functions in the citric acid cycle (TCA), coupling the hydrolysis of succinyl-CoA to the synthesis of either ATP or GTP and thus represents the only step of substrate-level phosphorylation in the TCA. The beta subunit provides nucleotide specificity of the enzyme and binds the substrate succinate, while the binding sites for coenzyme A and phosphate are found in the alpha subunit. The sequence is that of Succinate--CoA ligase [ADP-forming] subunit beta from Paracoccus denitrificans (strain Pd 1222).